The following is a 433-amino-acid chain: Enolase (433 aa).

Positions 37 to 59 (RAAVPSGASTGEHEAVELRDGDK) are disordered. A compositionally biased stretch (basic and acidic residues) spans 47-59 (GEHEAVELRDGDK). Glutamine 166 contributes to the (2R)-2-phosphoglycerate binding site. The active-site Proton donor is glutamate 208. Positions 245, 291, and 318 each coordinate Mg(2+). (2R)-2-phosphoglycerate-binding residues include lysine 343, arginine 372, serine 373, and lysine 394. Lysine 343 serves as the catalytic Proton acceptor.

It belongs to the enolase family. Mg(2+) is required as a cofactor.

The protein localises to the cytoplasm. It localises to the secreted. Its subcellular location is the cell surface. The enzyme catalyses (2R)-2-phosphoglycerate = phosphoenolpyruvate + H2O. It participates in carbohydrate degradation; glycolysis; pyruvate from D-glyceraldehyde 3-phosphate: step 4/5. Catalyzes the reversible conversion of 2-phosphoglycerate (2-PG) into phosphoenolpyruvate (PEP). It is essential for the degradation of carbohydrates via glycolysis. This is Enolase from Leptospira biflexa serovar Patoc (strain Patoc 1 / Ames).